The following is a 639-amino-acid chain: tRNA uridine 5-carboxymethylaminomethyl modification enzyme MnmG (639 aa).

FAD contacts are provided by residues 13-18, valine 125, and serine 180; that span reads GGGHAG. An NAD(+)-binding site is contributed by 273-287; the sequence is GPRYCPSIEDKVVRF. Glutamine 370 contributes to the FAD binding site. The disordered stretch occupies residues 620-639; sequence KRQGGNGPQSPRPDDGRARA.

It belongs to the MnmG family. Homodimer. Heterotetramer of two MnmE and two MnmG subunits. FAD is required as a cofactor.

It localises to the cytoplasm. Functionally, NAD-binding protein involved in the addition of a carboxymethylaminomethyl (cmnm) group at the wobble position (U34) of certain tRNAs, forming tRNA-cmnm(5)s(2)U34. The polypeptide is tRNA uridine 5-carboxymethylaminomethyl modification enzyme MnmG (Thioalkalivibrio sulfidiphilus (strain HL-EbGR7)).